A 160-amino-acid chain; its full sequence is SsrA-binding protein (160 aa).

The tract at residues 134–160 (RKAHDKREAVKERDWNRDKARLMRDRG) is disordered. The span at 138-160 (DKREAVKERDWNRDKARLMRDRG) shows a compositional bias: basic and acidic residues.

It belongs to the SmpB family.

The protein localises to the cytoplasm. Required for rescue of stalled ribosomes mediated by trans-translation. Binds to transfer-messenger RNA (tmRNA), required for stable association of tmRNA with ribosomes. tmRNA and SmpB together mimic tRNA shape, replacing the anticodon stem-loop with SmpB. tmRNA is encoded by the ssrA gene; the 2 termini fold to resemble tRNA(Ala) and it encodes a 'tag peptide', a short internal open reading frame. During trans-translation Ala-aminoacylated tmRNA acts like a tRNA, entering the A-site of stalled ribosomes, displacing the stalled mRNA. The ribosome then switches to translate the ORF on the tmRNA; the nascent peptide is terminated with the 'tag peptide' encoded by the tmRNA and targeted for degradation. The ribosome is freed to recommence translation, which seems to be the essential function of trans-translation. The sequence is that of SsrA-binding protein from Azorhizobium caulinodans (strain ATCC 43989 / DSM 5975 / JCM 20966 / LMG 6465 / NBRC 14845 / NCIMB 13405 / ORS 571).